The primary structure comprises 234 residues: uncharacterized protein (234 aa).

Disordered regions lie at residues 1–65 (MTSV…RRGP) and 182–234 (ARGA…GRKT).

This is an uncharacterized protein from Homo sapiens (Human).